The following is a 158-amino-acid chain: Kalata-B3/B6 (158 aa).

Positions 1–22 are cleaved as a signal peptide; sequence MAKFTKSLVLCLLLAAFVGAFG. A propeptide spanning residues 23–66 is cleaved from the precursor; sequence AELSEADKANVVNEIAANIQREILKGVKSSETTLTMFLKEMQLK. The segment at residues 67–96 is a cross-link (cyclopeptide (Gly-Asn)); sequence GLPTCGETCFGGTCNTPGCSCSSWPICTRN. Intrachain disulfides connect Cys71–Cys85, Cys75–Cys87, and Cys80–Cys93. Residues 97–121 constitute a propeptide that is removed on maturation; the sequence is GLPKRAGVKSSETTLTMFLKEMQLK. A cross-link (cyclopeptide (Gly-Asp)) is located at residues 122–151; the sequence is GLPTCGETCFGGTCNTPGCTCDPWPICTRD. Intrachain disulfides connect Cys126–Cys140, Cys130–Cys142, and Cys135–Cys148. The propeptide occupies 152–158; sequence GLPSAAA.

It belongs to the cyclotide family. Moebius subfamily. Kalata-B3 and kalata-B6 are cyclic peptides.

Probably participates in a plant defense mechanism. Has hemolytic activity. The sequence is that of Kalata-B3/B6 (OAK2) from Oldenlandia affinis.